We begin with the raw amino-acid sequence, 558 residues long: MPLGPWERVEAALTLLAIDPAGLKGLWLRARASALRDRITGALGALPLPVRRIHPTIGDDALFGGLDLAATLSAGTPVVQKGILDEPAVLVLAMAERTLPGLAARLGTALDAPRHCLIALDEGAERDELLPLGLVDRLALFLDLDGLPWGETREIALDPERLAAARARLAAVATPPEAAATLARVAAQLGIASLRAPTLALAAARAQAAWEGHAAVTDEDIRRAADLVFAHRAMPASEEAPPEPEPEPPEDQPDDSPPPPEQQQGEEMFPEEMLVEAVRAALPADLLEQLAAGRAARMARGATGTGSAKAGNRRGRPLPSRMGRLGTGARIDLVGTLRAAAPWQPLRRRQQKTDAVLLVRPSDIRIKRFRETSDRVLIFAVDASGSSAMARLSEAKGAVELLLGQAYARRDHVSLLAFRGRDAELILPPTRSLVQTKRRLAGLPGGGGTPLAHGLRLALAVGLQARARGMTPTVALLTDGRGNIALDGSANRAQAEEDALKLAASLRGSGLPAVVIDTANRPQPSLAALARALDAPYIALPRADAHKLSNVLGAAMGD.

Disordered regions lie at residues 234-268 (MPAS…GEEM) and 298-325 (MARG…MGRL). The span at 240 to 254 (APPEPEPEPPEDQPD) shows a compositional bias: acidic residues. The span at 298-308 (MARGATGTGSA) shows a compositional bias: low complexity. The VWFA domain maps to 376 to 555 (VLIFAVDASG…HKLSNVLGAA (180 aa)).

It belongs to the Mg-chelatase subunits D/I family.

It catalyses the reaction protoporphyrin IX + Mg(2+) + ATP + H2O = Mg-protoporphyrin IX + ADP + phosphate + 3 H(+). Its pathway is porphyrin-containing compound metabolism; bacteriochlorophyll biosynthesis. Its function is as follows. Involved in bacteriochlorophyll biosynthesis; introduces a magnesium ion into protoporphyrin IX to yield Mg-protoporphyrin IX. In Cereibacter sphaeroides (strain ATCC 17023 / DSM 158 / JCM 6121 / CCUG 31486 / LMG 2827 / NBRC 12203 / NCIMB 8253 / ATH 2.4.1.) (Rhodobacter sphaeroides), this protein is Magnesium-chelatase 60 kDa subunit (bchD).